Here is a 147-residue protein sequence, read N- to C-terminus: Nucleoside diphosphate kinase (147 aa).

Residues Lys9, Phe57, Arg85, Thr91, Arg102, and Asn112 each coordinate ATP. Catalysis depends on His115, which acts as the Pros-phosphohistidine intermediate.

Belongs to the NDK family. As to quaternary structure, homotetramer. Requires Mg(2+) as cofactor.

The protein localises to the cytoplasm. It catalyses the reaction a 2'-deoxyribonucleoside 5'-diphosphate + ATP = a 2'-deoxyribonucleoside 5'-triphosphate + ADP. The enzyme catalyses a ribonucleoside 5'-diphosphate + ATP = a ribonucleoside 5'-triphosphate + ADP. Its function is as follows. Major role in the synthesis of nucleoside triphosphates other than ATP. The ATP gamma phosphate is transferred to the NDP beta phosphate via a ping-pong mechanism, using a phosphorylated active-site intermediate. This is Nucleoside diphosphate kinase from Listeria monocytogenes serotype 4a (strain HCC23).